A 192-amino-acid polypeptide reads, in one-letter code: Putative 3-methyladenine DNA glycosylase (192 aa).

The protein belongs to the DNA glycosylase MPG family.

This chain is Putative 3-methyladenine DNA glycosylase, found in Bdellovibrio bacteriovorus (strain ATCC 15356 / DSM 50701 / NCIMB 9529 / HD100).